A 584-amino-acid chain; its full sequence is DNA damage-binding protein CMR1 (584 aa).

Residues 29-44 (SATDSISREIPNQRQA) are compositionally biased toward polar residues. Positions 29-90 (SATDSISREI…TEEYQKVKEE (62 aa)) are disordered. The segment covering 59-68 (IKKEPQEPSR) has biased composition (basic and acidic residues). Residues 76–110 (VTMENTEEYQKVKEEMEEAERKKKELEKLKSTRLF) adopt a coiled-coil conformation. WD repeat units follow at residues 226-267 (ITHQ…DEDP), 274-314 (PHGR…SSEV), 373-413 (LHDK…KSNS), 431-469 (SSRL…SELP), 506-549 (GRWV…LAHL), and 553-584 (EKVG…YLFE).

It belongs to the WD repeat DDB2/WDR76 family.

In terms of biological role, DNA-binding protein that binds to both single- and double-stranded DNA. Binds preferentially to UV-damaged DNA. May be involved in DNA-metabolic processes. The protein is DNA damage-binding protein CMR1 of Debaryomyces hansenii (strain ATCC 36239 / CBS 767 / BCRC 21394 / JCM 1990 / NBRC 0083 / IGC 2968) (Yeast).